The sequence spans 267 residues: Probable 3-methyl-2-oxobutanoate hydroxymethyltransferase (267 aa).

The protein belongs to the PanB family.

The enzyme catalyses 3-methyl-2-oxobutanoate + (6R)-5,10-methylene-5,6,7,8-tetrahydrofolate + H2O = 2-dehydropantoate + (6S)-5,6,7,8-tetrahydrofolate. It participates in cofactor biosynthesis; (R)-pantothenate biosynthesis; (R)-pantoate from 3-methyl-2-oxobutanoate: step 1/2. The sequence is that of Probable 3-methyl-2-oxobutanoate hydroxymethyltransferase from Schizosaccharomyces pombe (strain 972 / ATCC 24843) (Fission yeast).